Reading from the N-terminus, the 713-residue chain is Glycine--tRNA ligase beta subunit (713 aa).

This sequence belongs to the class-II aminoacyl-tRNA synthetase family. As to quaternary structure, tetramer of two alpha and two beta subunits.

Its subcellular location is the cytoplasm. It carries out the reaction tRNA(Gly) + glycine + ATP = glycyl-tRNA(Gly) + AMP + diphosphate. This chain is Glycine--tRNA ligase beta subunit, found in Leptothrix cholodnii (strain ATCC 51168 / LMG 8142 / SP-6) (Leptothrix discophora (strain SP-6)).